We begin with the raw amino-acid sequence, 85 residues long: UPF0291 protein SP_1473 (85 aa).

The tract at residues threonine 62–serine 85 is disordered.

It belongs to the UPF0291 family.

It localises to the cytoplasm. In Streptococcus pneumoniae serotype 4 (strain ATCC BAA-334 / TIGR4), this protein is UPF0291 protein SP_1473.